Reading from the N-terminus, the 278-residue chain is Ribosomal RNA small subunit methyltransferase A (278 aa).

S-adenosyl-L-methionine-binding residues include Asn27, Leu29, Gly54, Glu75, Asp95, and Asn118.

The protein belongs to the class I-like SAM-binding methyltransferase superfamily. rRNA adenine N(6)-methyltransferase family. RsmA subfamily.

Its subcellular location is the cytoplasm. It catalyses the reaction adenosine(1518)/adenosine(1519) in 16S rRNA + 4 S-adenosyl-L-methionine = N(6)-dimethyladenosine(1518)/N(6)-dimethyladenosine(1519) in 16S rRNA + 4 S-adenosyl-L-homocysteine + 4 H(+). Functionally, specifically dimethylates two adjacent adenosines (A1518 and A1519) in the loop of a conserved hairpin near the 3'-end of 16S rRNA in the 30S particle. May play a critical role in biogenesis of 30S subunits. This is Ribosomal RNA small subunit methyltransferase A from Chlamydia caviae (strain ATCC VR-813 / DSM 19441 / 03DC25 / GPIC) (Chlamydophila caviae).